Reading from the N-terminus, the 240-residue chain is Transcriptional regulatory protein ChvI (240 aa).

One can recognise a Response regulatory domain in the interval 3–116 (TIALVDDDRN…LLVERVKAIL (114 aa)). Residues Asp-8, Asp-9, and Asp-52 each contribute to the Mg(2+) site. Position 52 is a 4-aspartylphosphate (Asp-52). Positions 139-238 (SRSLERGQLV…LYGVGYRFRE (100 aa)) form a DNA-binding region, ompR/PhoB-type.

It depends on Mg(2+) as a cofactor. Post-translationally, phosphorylated by ChvG.

It is found in the cytoplasm. It participates in glycan metabolism; exopolysaccharide biosynthesis. In terms of biological role, member of a two-component regulatory system ChvG(ExoS)/ChvI involved in regulating the production of succinoglycan. This is Transcriptional regulatory protein ChvI (chvI) from Rhizobium meliloti (strain 1021) (Ensifer meliloti).